The chain runs to 843 residues: MTQVTVKELAQEVEAPVERLLQQMREAGLPHTDAGQVVTDNEKQTLLTHLKSSHKSKAEEPRKITLQRKTTSTLRVAGSKSISVEVRKKKVFVQRSPEEIQAEQKREQDERRAAENAARDKVDADVRQRNEEQARRHATATAAAAPAAKAEPAPAAAAPAPAPVVADAPASEDAAARAAERKKDETRRNESRTRDDDRRRGEAPRVSIKVKVKEKEKAPTPRAAPRTTDEESDGARRGRGGKGKLKKRNQHGFQNPTGPVIRDVTIGETITVSELAQQMSVKAAEVVKFMFKMGTPVTINQVLDQETAQLIAEELGHKVTLVSDTALEDSLAESLKFEGQAESRAPVVTVMGHVDHGKTSLLDYIRRAKVAAGEAGGITQHIGAYHVETDRGMVTFLDTPGHAAFTQMRARGAKATDIVILVVAADDGVMPQTREAVQHAKAAGVPLVVAVNKIDKPGADLDRIRNELSVEGVTSEEWGGDTPFVKVSAKMGTGVDELLEAVLLQAEVLELTATPTAPGRGVVVESRLDKGRGPVATILVQDGTLRQGDMVLCGSNYGRVRAMLDENGKPVKEAGPSIPVEILGLDGTPEAGDELSVVADEKKAREVALFRQGKYREVKLARAHAGKLENIFETMGQEEKKTLNIVLKTDVRGSLEALQGSLGGLGNDEVQVRVIGGGVGGITESDANLALASNAVLFGFNVRADAGARKIVEQEGLDMRYYNVIYDIIEDVKKALTGMLGSDVRENILGVAEVRDVFRSPKFGAIAGCMVIEGTVYRNRPIRVLRDDVVIFEGELESLRRFKDDAAEVRSGMECGIGVKSYNDVKVGDKIEVFEKVQVARTL.

Disordered stretches follow at residues 50–72 and 94–260; these read LKSS…KTTS and QRSP…TGPV. Over residues 96–135 the composition is skewed to basic and acidic residues; that stretch reads SPEEIQAEQKREQDERRAAENAARDKVDADVRQRNEEQAR. Residues 139-173 are compositionally biased toward low complexity; the sequence is TATAAAAPAAKAEPAPAAAAPAPAPVVADAPASED. Composition is skewed to basic and acidic residues over residues 174 to 203 and 227 to 236; these read AAAR…RGEA and TTDEESDGAR. A compositionally biased stretch (basic residues) spans 237 to 250; sequence RGRGGKGKLKKRNQ. One can recognise a tr-type G domain in the interval 343-516; that stretch reads SRAPVVTVMG…EVLELTATPT (174 aa). Positions 352–359 are G1; the sequence is GHVDHGKT. 352–359 provides a ligand contact to GTP; sequence GHVDHGKT. The interval 377–381 is G2; that stretch reads GITQH. Positions 398 to 401 are G3; that stretch reads DTPG. GTP-binding positions include 398-402 and 452-455; these read DTPGH and NKID. The interval 452–455 is G4; the sequence is NKID. The interval 488 to 490 is G5; the sequence is SAK.

The protein belongs to the TRAFAC class translation factor GTPase superfamily. Classic translation factor GTPase family. IF-2 subfamily.

The protein resides in the cytoplasm. One of the essential components for the initiation of protein synthesis. Protects formylmethionyl-tRNA from spontaneous hydrolysis and promotes its binding to the 30S ribosomal subunits. Also involved in the hydrolysis of GTP during the formation of the 70S ribosomal complex. The sequence is that of Translation initiation factor IF-2 from Pseudomonas putida (strain W619).